The following is a 505-amino-acid chain: Putative diacyglycerol O-acyltransferase MT0919 (505 aa).

The Proton acceptor role is filled by His167.

The protein belongs to the long-chain O-acyltransferase family.

It catalyses the reaction an acyl-CoA + a 1,2-diacyl-sn-glycerol = a triacyl-sn-glycerol + CoA. It participates in glycerolipid metabolism; triacylglycerol biosynthesis. The sequence is that of Putative diacyglycerol O-acyltransferase MT0919 from Mycobacterium tuberculosis (strain CDC 1551 / Oshkosh).